We begin with the raw amino-acid sequence, 240 residues long: T4 protein (240 aa).

Belongs to the poxviruses B9 family.

The chain is T4 protein from Sheeppox virus (strain KS-1) (SPPV).